A 634-amino-acid polypeptide reads, in one-letter code: tRNA uridine 5-carboxymethylaminomethyl modification enzyme MnmG (634 aa).

14 to 19 (GGGHAG) contributes to the FAD binding site. 279–293 (GPRYCPSIEDKVVRF) serves as a coordination point for NAD(+).

It belongs to the MnmG family. In terms of assembly, homodimer. Heterotetramer of two MnmE and two MnmG subunits. FAD is required as a cofactor.

It is found in the cytoplasm. Functionally, NAD-binding protein involved in the addition of a carboxymethylaminomethyl (cmnm) group at the wobble position (U34) of certain tRNAs, forming tRNA-cmnm(5)s(2)U34. The polypeptide is tRNA uridine 5-carboxymethylaminomethyl modification enzyme MnmG (Xanthomonas campestris pv. campestris (strain B100)).